The sequence spans 437 residues: Serine hydroxymethyltransferase (437 aa).

(6S)-5,6,7,8-tetrahydrofolate is bound by residues L130 and 134 to 136 (GHL). Residue K239 is modified to N6-(pyridoxal phosphate)lysine.

This sequence belongs to the SHMT family. As to quaternary structure, homodimer. It depends on pyridoxal 5'-phosphate as a cofactor.

It is found in the cytoplasm. The enzyme catalyses (6R)-5,10-methylene-5,6,7,8-tetrahydrofolate + glycine + H2O = (6S)-5,6,7,8-tetrahydrofolate + L-serine. It functions in the pathway one-carbon metabolism; tetrahydrofolate interconversion. It participates in amino-acid biosynthesis; glycine biosynthesis; glycine from L-serine: step 1/1. In terms of biological role, catalyzes the reversible interconversion of serine and glycine with tetrahydrofolate (THF) serving as the one-carbon carrier. This reaction serves as the major source of one-carbon groups required for the biosynthesis of purines, thymidylate, methionine, and other important biomolecules. Also exhibits THF-independent aldolase activity toward beta-hydroxyamino acids, producing glycine and aldehydes, via a retro-aldol mechanism. The chain is Serine hydroxymethyltransferase from Bartonella quintana (strain Toulouse) (Rochalimaea quintana).